The primary structure comprises 343 residues: 2-deoxy-scyllo-inosamine dehydrogenase (343 aa).

Zn(2+) contacts are provided by Cys-37, His-59, Cys-91, Cys-94, Cys-97, Cys-105, and Glu-146.

This sequence belongs to the zinc-containing alcohol dehydrogenase family. DOIA dehydrogenase subfamily. The cofactor is Zn(2+).

The enzyme catalyses 2-deoxy-scyllo-inosamine + NADP(+) = 3-amino-2,3-dideoxy-scyllo-inosose + NADPH + H(+). The catalysed reaction is 2-deoxy-scyllo-inosamine + NAD(+) = 3-amino-2,3-dideoxy-scyllo-inosose + NADH + H(+). It participates in metabolic intermediate biosynthesis; 2-deoxystreptamine biosynthesis; 2-deoxystreptamine from D-glucose 6-phosphate: step 3/4. It functions in the pathway antibiotic biosynthesis; kanamycin biosynthesis. Functionally, catalyzes the oxidation of 2-deoxy-scyllo-inosamine (DOIA) with NAD(+) or NADP(+), forming 3-amino-2,3-dideoxy-scyllo-inosose (amino-DOI). The protein is 2-deoxy-scyllo-inosamine dehydrogenase (kanE) of Streptomyces kanamyceticus.